We begin with the raw amino-acid sequence, 3148 residues long: Huntingtin (3148 aa).

HEAT repeat units follow at residues 149-186 and 191-228; these read PYLV…ALGH and GEIK…HSRR. 3 stretches are compositionally biased toward polar residues: residues 428 to 451, 475 to 486, and 516 to 526; these read QQPR…SSEQ, SRSSSCGANITP, and PSDSSQTTTEG. 2 disordered regions span residues 428–532 and 557–622; these read QQPR…SAVT and QDEE…NKMS. A compositionally biased stretch (basic and acidic residues) spans 602–621; it reads SVDRFIPKDEPPEPEPDNKM. HEAT repeat units follow at residues 760–797 and 861–898; these read LSLV…SLCG and LQER…RLFF. Composition is skewed to low complexity over residues 1025–1042 and 1105–1115; these read TLSV…TTSS and SSSSTNTSGGT. Disordered stretches follow at residues 1025 to 1047, 1098 to 1117, and 1158 to 1215; these read TLSV…VDPE, WAGE…GTHK, and GPPV…GSTA. The span at 1201–1215 shows a compositional bias: polar residues; sequence EANTGRPTESTGSTA. The stretch at 1419 to 1456 is one HEAT 5 repeat; the sequence is LFEPLVIKALKQYTTSTSVALQRQVLDLLAQLVQLRVN. A compositionally biased stretch (polar residues) spans 1712-1730; sequence PNLSPSDQPAGDGQQNQEP. Disordered regions lie at residues 1712–1735 and 2072–2091; these read PNLS…GEAQ and VSDT…DGDP. Over residues 2072-2084 the composition is skewed to low complexity; that stretch reads VSDTSSPSTPVTS. The Nuclear export signal signature appears at 2398–2407; it reads IIISLSRLPL. Positions 2639–2649 are enriched in acidic residues; the sequence is EWGEDEDDEAD. Residues 2639–2664 form a disordered region; it reads EWGEDEDDEADPPAPTSPPLSPINSR. Residues 2650–2659 show a composition bias toward pro residues; the sequence is PPAPTSPPLS.

The protein belongs to the huntingtin family.

It is found in the cytoplasm. Its subcellular location is the nucleus. Its function is as follows. May play a role in microtubule-mediated transport or vesicle function. This is Huntingtin (htt) from Takifugu rubripes (Japanese pufferfish).